A 366-amino-acid chain; its full sequence is Probable cinnamyl alcohol dehydrogenase 3 (366 aa).

Residue cysteine 53 participates in Zn(2+) binding. Serine 55 contributes to the NADP(+) binding site. 7 residues coordinate Zn(2+): histidine 75, glutamate 76, cysteine 106, cysteine 109, cysteine 112, cysteine 120, and cysteine 169. Residues threonine 173, 194–199 (GLGGLG), 217–222 (SSSPGK), threonine 257, glycine 281, and 304–306 (SNI) contribute to the NADP(+) site.

Belongs to the zinc-containing alcohol dehydrogenase family. In terms of assembly, homodimer. It depends on Zn(2+) as a cofactor.

The catalysed reaction is (E)-cinnamyl alcohol + NADP(+) = (E)-cinnamaldehyde + NADPH + H(+). It catalyses the reaction (E)-coniferol + NADP(+) = (E)-coniferaldehyde + NADPH + H(+). It carries out the reaction (E)-sinapyl alcohol + NADP(+) = (E)-sinapaldehyde + NADPH + H(+). The enzyme catalyses (E)-4-coumaroyl alcohol + NADP(+) = (E)-4-coumaraldehyde + NADPH + H(+). The catalysed reaction is (E)-caffeyl alcohol + NADP(+) = (E)-caffeyl aldehyde + NADPH + H(+). It functions in the pathway aromatic compound metabolism; phenylpropanoid biosynthesis. In terms of biological role, involved in lignin biosynthesis. Catalyzes the final step specific for the production of lignin monomers. Catalyzes the NADPH-dependent reduction of coniferaldehyde, 5-hydroxyconiferaldehyde, sinapaldehyde, 4-coumaraldehyde and caffeyl aldehyde to their respective alcohols. The chain is Probable cinnamyl alcohol dehydrogenase 3 from Oryza sativa subsp. japonica (Rice).